Reading from the N-terminus, the 288-residue chain is Bifunctional protein FolD (288 aa).

NADP(+) is bound by residues 166-168 (GAS) and I232.

The protein belongs to the tetrahydrofolate dehydrogenase/cyclohydrolase family. As to quaternary structure, homodimer.

It carries out the reaction (6R)-5,10-methylene-5,6,7,8-tetrahydrofolate + NADP(+) = (6R)-5,10-methenyltetrahydrofolate + NADPH. The enzyme catalyses (6R)-5,10-methenyltetrahydrofolate + H2O = (6R)-10-formyltetrahydrofolate + H(+). The protein operates within one-carbon metabolism; tetrahydrofolate interconversion. In terms of biological role, catalyzes the oxidation of 5,10-methylenetetrahydrofolate to 5,10-methenyltetrahydrofolate and then the hydrolysis of 5,10-methenyltetrahydrofolate to 10-formyltetrahydrofolate. This Salmonella arizonae (strain ATCC BAA-731 / CDC346-86 / RSK2980) protein is Bifunctional protein FolD.